The following is a 706-amino-acid chain: Lethal(3)malignant brain tumor-like protein 2 (706 aa).

Residues 1–85 (MEKPRGVEET…GTPRSLDGSG (85 aa)) form a disordered region. Residue S13 is modified to Phosphoserine. The segment covering 15–26 (PMEEEEEDDDLE) has biased composition (acidic residues). Positions 39 to 50 (SSAGSESSSYLE) are enriched in low complexity. The span at 54–63 (EAEHEDREAG) shows a compositional bias: basic and acidic residues. The residue at position 68 (S68) is a Phosphoserine. T77 is subject to Phosphothreonine. The segment at 82-117 (DGSGSEPAVCEMCGIVGTREAFFSKTKRFCSVSCSR) adopts an FCS-type zinc-finger fold. Zn(2+) contacts are provided by C91, C94, C111, and C115. MBT repeat units follow at residues 180-284 (FDWG…LVPP), 292-392 (TDWK…IKLS), 398-501 (MAHH…LTPP), and 509-605 (FSWE…LQPP). Residue S339 is modified to Phosphoserine. K406 participates in a covalent cross-link: Glycyl lysine isopeptide (Lys-Gly) (interchain with G-Cter in SUMO2). Positions 606-669 (VATEPTTPLK…KAPSEPAPDE (64 aa)) are disordered. The segment covering 620–635 (TKKKKKQFGKKRKRIP) has biased composition (basic residues). Glycyl lysine isopeptide (Lys-Gly) (interchain with G-Cter in SUMO2) cross-links involve residues K648, K660, and K676. A disordered region spans residues 685-706 (ADKALSPELPVPVENIKQETDD). Position 690 is a phosphoserine (S690). K701 participates in a covalent cross-link: Glycyl lysine isopeptide (Lys-Gly) (interchain with G-Cter in SUMO1); alternate. Residue K701 forms a Glycyl lysine isopeptide (Lys-Gly) (interchain with G-Cter in SUMO2); alternate linkage.

In terms of assembly, part of the E2F6.com-1 complex in G0 phase composed of E2F6, MGA, MAX, TFDP1, CBX3, BAT8, EUHMTASE1, RING1, RNF2, MBLR, BAT8 and YAF2.

The protein localises to the nucleus. Its function is as follows. Putative Polycomb group (PcG) protein. PcG proteins maintain the transcriptionally repressive state of genes, probably via a modification of chromatin, rendering it heritably changed in its expressibility. Its association with a chromatin-remodeling complex suggests that it may contribute to prevent expression of genes that trigger the cell into mitosis. Binds to monomethylated and dimethylated 'Lys-20' on histone H4. Binds histone H3 peptides that are monomethylated or dimethylated on 'Lys-4', 'Lys-9' or 'Lys-27'. This Bos taurus (Bovine) protein is Lethal(3)malignant brain tumor-like protein 2 (L3MBTL2).